A 133-amino-acid chain; its full sequence is Small ribosomal subunit protein uS11 (133 aa).

This sequence belongs to the universal ribosomal protein uS11 family. As to quaternary structure, part of the 30S ribosomal subunit. Interacts with proteins S7 and S18. Binds to IF-3.

Located on the platform of the 30S subunit, it bridges several disparate RNA helices of the 16S rRNA. Forms part of the Shine-Dalgarno cleft in the 70S ribosome. This chain is Small ribosomal subunit protein uS11, found in Bordetella petrii (strain ATCC BAA-461 / DSM 12804 / CCUG 43448).